Here is a 235-residue protein sequence, read N- to C-terminus: Octanoyltransferase LIP2, mitochondrial (235 aa).

The N-terminal 32 residues, 1 to 32 (MRSPRTLEVWKLGTVNYLKSLKLQEKLVSERK), are a transit peptide targeting the mitochondrion. The 185-residue stretch at 34 to 218 (HQIPDTLLSL…CLAKAFSYDD (185 aa)) folds into the BPL/LPL catalytic domain. Substrate contacts are provided by residues 79-86 (RGGDITFH), 147-149 (AIG), and 160-162 (GLA). Cys-178 functions as the Acyl-thioester intermediate in the catalytic mechanism.

It belongs to the LipB family. As to expression, expressed in leaves. Expressed in roots, rosette leaves, cauline leaves, stems and siliques.

It localises to the mitochondrion. It carries out the reaction octanoyl-[ACP] + L-lysyl-[protein] = N(6)-octanoyl-L-lysyl-[protein] + holo-[ACP] + H(+). Its pathway is protein modification; protein lipoylation via endogenous pathway; protein N(6)-(lipoyl)lysine from octanoyl-[acyl-carrier-protein]: step 1/2. In terms of biological role, catalyzes the transfer of endogenously produced octanoic acid from octanoyl-acyl-carrier-protein onto the lipoyl domains of lipoate-dependent enzymes. Lipoyl-ACP can also act as a substrate although octanoyl-ACP is likely to be the physiological substrate. Together with LIP1 is essential for mitochondrial protein lipoylation during seed development. Required for the lipoylation of mitochondrial 2-oxoglutarate dehydrogenase component E2 proteins in leaves and roots. The chain is Octanoyltransferase LIP2, mitochondrial from Arabidopsis thaliana (Mouse-ear cress).